Here is a 1014-residue protein sequence, read N- to C-terminus: UvrABC system protein A (1014 aa).

32–39 (GLSGSGKS) contacts ATP. ABC transporter domains follow at residues 314-592 (WSHG…AESQ) and 612-941 (QDPS…KFLR). 645 to 652 (GVSGSGKS) is a binding site for ATP. The segment at 744 to 770 (CENCAGDGTIKIEMNFLPDVYVPCEVC) adopts a C4-type zinc-finger fold. A compositionally biased stretch (low complexity) spans 976–995 (TKTVTGTAAKKATATRTAKT). Residues 976-1014 (TKTVTGTAAKKATATRTAKTAVKKAAKPAAKKTTRTSKA) form a disordered region. The segment covering 996-1014 (AVKKAAKPAAKKTTRTSKA) has biased composition (basic residues).

Belongs to the ABC transporter superfamily. UvrA family. As to quaternary structure, forms a heterotetramer with UvrB during the search for lesions.

The protein localises to the cytoplasm. Its function is as follows. The UvrABC repair system catalyzes the recognition and processing of DNA lesions. UvrA is an ATPase and a DNA-binding protein. A damage recognition complex composed of 2 UvrA and 2 UvrB subunits scans DNA for abnormalities. When the presence of a lesion has been verified by UvrB, the UvrA molecules dissociate. This is UvrABC system protein A from Streptomyces coelicolor (strain ATCC BAA-471 / A3(2) / M145).